A 121-amino-acid polypeptide reads, in one-letter code: Large ribosomal subunit protein uL22 (121 aa).

Belongs to the universal ribosomal protein uL22 family. Part of the 50S ribosomal subunit.

Functionally, this protein binds specifically to 23S rRNA; its binding is stimulated by other ribosomal proteins, e.g. L4, L17, and L20. It is important during the early stages of 50S assembly. It makes multiple contacts with different domains of the 23S rRNA in the assembled 50S subunit and ribosome. The globular domain of the protein is located near the polypeptide exit tunnel on the outside of the subunit, while an extended beta-hairpin is found that lines the wall of the exit tunnel in the center of the 70S ribosome. The chain is Large ribosomal subunit protein uL22 from Pseudarthrobacter chlorophenolicus (strain ATCC 700700 / DSM 12829 / CIP 107037 / JCM 12360 / KCTC 9906 / NCIMB 13794 / A6) (Arthrobacter chlorophenolicus).